The following is a 257-amino-acid chain: Snake venom serine protease KN9 (257 aa).

Positions 1–18 (MVLIRVLANLLILQLSYA) are cleaved as a signal peptide. Residues 19 to 24 (QKSSEL) constitute a propeptide that is removed on maturation. The Peptidase S1 domain maps to 25–248 (VVGGDECNIN…HLDWIKSIIA (224 aa)). Disulfide bonds link cysteine 31/cysteine 162, cysteine 49/cysteine 65, cysteine 141/cysteine 209, cysteine 173/cysteine 188, and cysteine 199/cysteine 224. The active-site Charge relay system is histidine 64. Asparagine 102 is a glycosylation site (N-linked (GlcNAc...) asparagine). The active-site Charge relay system is aspartate 109. Residues asparagine 120 and asparagine 121 are each glycosylated (N-linked (GlcNAc...) asparagine). Serine 203 (charge relay system) is an active-site residue.

This sequence belongs to the peptidase S1 family. Snake venom subfamily. In terms of assembly, monomer. As to expression, expressed by the venom gland.

It is found in the secreted. Its function is as follows. Snake venom serine protease that may act in the hemostasis system of the prey. The polypeptide is Snake venom serine protease KN9 (Trimeresurus stejnegeri (Chinese green tree viper)).